Here is a 1036-residue protein sequence, read N- to C-terminus: MGSISHLPAYGHRLLPVLIDEIARDEPDRVLFYTPRNGQPSQGYDEVNTKIFANSINRLCGWLDSQLGSPAGPRTIAYIGQNDLRYFIMMIASTKLGHRLLLSSPRNSVEGHVSLIKQSGCEFWIASSGLDHHEFLQDLQIPSVEAPELPQLLDPTPVKPYVYQKSWNEGKSDVLALLHTSGSTGLPKLVPVYLETAATVDGFHLMEPTNGKRPTGVEWTGTRQLCAMPLFHVAGICLGLYSAVFFNWTVVLPSVGPIMQHVIEDALDHISLDSAFISPSVLQDISKSPRVLEKLSKLKFITSAGGPIPQSVGDLIHPRVPIMQTMGMTEGQWLASVVTHPDEWAYYYFHPRTGVEMRPYSEDLSELVFVQNPKLSATQPVFKTFPELDIWETKDLYSRHPKHPDLWKYEMRRDDLIILSNGEKFNPLAAEGKLISHPWIAAAYLTGRGRFQTAALLYPDENSLDKSDDIITDNVWPTFEEVNKSLPAFAQIHRDFVKIVRTPFPRTPKGTLARNETEKAFTADINAIYDRSTHGKPSVHINGTTEDVVRSGIREAIETVSGLVDLKDDDNIFTRGFDSLHVIRLAGLLSSAFDQPLEVEAGTIYTNPTISQLAHTVWSHLEHGPQDKVHHSEVTREMLAKYAQAFEPPREAKEHIVLTGTTGEIGSYLLDVLCNNDKVAKVWCLNRSADAFQRQVDSAKSKGLSSSWKSKAKFVRYDVASENLGLSQDGLEEIKNEATAIIHNAWEVNFNLPLSSFEPQFIGLKSLVDVCRESRQKIRFFFVSSISAAMNWPSDLLGPVPEASIPRFDAPINGYGSSKLVAEHLLSKAARSGVLSLSILRVGQVAGPVKTLGEGSIWTRRDWVPAIIDASAHLRALPLDLGSASILDWIPIDLLTEVIGQLVVPVNPVVGQENYYNLLNPRTPSWTDSLPGLKARLEASFSDTFEIIPLQEWISRLRGAEKTIVKEVSEGSSETAIRAQSGLKLLAFFEMLASGKEGSRGLEWAKANTLAQSSFLACMEPVSSAWFDTWLKQWGY.

Positions 21-343 (EIARDEPDRV…LASVVTHPDE (323 aa)) are adenylation (A) domain. The Carrier domain maps to 544–621 (TTEDVVRSGI…QLAHTVWSHL (78 aa)). Serine 579 carries the post-translational modification O-(pantetheine 4'-phosphoryl)serine. The segment at 658-899 (LTGTTGEIGS…IPIDLLTEVI (242 aa)) is thioester reductase (TR) domain.

The protein operates within mycotoxin biosynthesis. Its function is as follows. Non-canonical non-ribosomal peptide synthetase; part of the gene cluster that mediates the biosynthesis of fusaric acid, a mycotoxin with low to moderate toxicity to animals and humans, but with high phytotoxic properties. L-aspartate is suggested as fusaric acid amino acid precursor that is activated and further processed to O-acetyl-L-homoserine by cluster enzymes aspartate kinase FUB3 and homoserine O-acetyltransferase FUB5, as well as enzymes of the primary metabolism. The polyketide synthase (PKS) FUB1 generates the triketide trans-2-hexenal which is presumptively released by the hydrolase FUB4 and linked to the NRPS-bound amino acid precursor by NAD(P)-dependent dehydrogenase FUB6. FUB1, FUB4, and the non-canonical NRPS Fub8 may form an enzyme complex. Further processing of the NRPS-bound intermediate might be carried out by FUB6 and the sulfhydrylase FUB7, enabling a spontaneous electrocyclization to close the carbon backbone of fusaric acid. Dihydrofusaric acid is likely to be released via reduction by the thioester reductase (TR) domain of FUB8 whereupon the final oxidation to fusaric acid may (also) be performed by the FMN-dependent dehydrogenase FUB9. This chain is Non-canonical non-ribosomal peptide synthetase FUB8, found in Fusarium oxysporum f. sp. lycopersici (strain 4287 / CBS 123668 / FGSC 9935 / NRRL 34936) (Fusarium vascular wilt of tomato).